A 130-amino-acid chain; its full sequence is Protein BLT4 (130 aa).

The first 25 residues, 1 to 25, serve as a signal peptide directing secretion; it reads MARTAATKLALVPLVAAMLLVAADA. The segment at 80–130 is disordered; the sequence is VPARTTPAGPQASPPGAASASPTRSAPVSTALRSTDRTRAPHISSDRRLVG. Residues 84-110 are compositionally biased toward low complexity; it reads TTPAGPQASPPGAASASPTRSAPVSTA. The segment covering 113 to 130 has biased composition (basic and acidic residues); that stretch reads STDRTRAPHISSDRRLVG.

The protein belongs to the plant LTP family. Shoot meristem.

Functionally, possible dehydrative stress responsive protein. Not shown to have lipid transfer activity. The polypeptide is Protein BLT4 (BLT4) (Hordeum vulgare (Barley)).